The following is a 627-amino-acid chain: uncharacterized protein (627 aa).

Disordered regions lie at residues 441-466 (EAVPEGPDGGGPWLEDEPGRGAQGEN) and 608-627 (DLRGTQFDYERGKGESTEDR). A compositionally biased stretch (basic and acidic residues) spans 615-627 (DYERGKGESTEDR).

This is an uncharacterized protein from Homo sapiens (Human).